The sequence spans 171 residues: Translationally-controlled tumor protein homolog (171 aa).

The 171-residue stretch at 1-171 (MKIWKDIFTG…FKHGLEEEKF (171 aa)) folds into the TCTP domain.

The protein belongs to the TCTP family.

The protein resides in the cytoplasm. Its function is as follows. Involved in calcium binding and microtubule stabilization. The protein is Translationally-controlled tumor protein homolog (Tctp) of Aedes albopictus (Asian tiger mosquito).